The following is a 1405-amino-acid chain: DNA-directed RNA polymerase subunit beta' (1405 aa).

Zn(2+) contacts are provided by cysteine 70, cysteine 72, cysteine 85, and cysteine 88. Aspartate 460, aspartate 462, and aspartate 464 together coordinate Mg(2+). Zn(2+)-binding residues include cysteine 815, cysteine 889, cysteine 896, and cysteine 899. Positions 1363-1388 are disordered; that stretch reads LAHHAERRRRREDPESTANPSAFDVE.

Belongs to the RNA polymerase beta' chain family. The RNAP catalytic core consists of 2 alpha, 1 beta, 1 beta' and 1 omega subunit. When a sigma factor is associated with the core the holoenzyme is formed, which can initiate transcription. It depends on Mg(2+) as a cofactor. Requires Zn(2+) as cofactor.

The enzyme catalyses RNA(n) + a ribonucleoside 5'-triphosphate = RNA(n+1) + diphosphate. Its function is as follows. DNA-dependent RNA polymerase catalyzes the transcription of DNA into RNA using the four ribonucleoside triphosphates as substrates. The protein is DNA-directed RNA polymerase subunit beta' of Chromohalobacter salexigens (strain ATCC BAA-138 / DSM 3043 / CIP 106854 / NCIMB 13768 / 1H11).